Reading from the N-terminus, the 149-residue chain is Large ribosomal subunit protein bL9 (149 aa).

It belongs to the bacterial ribosomal protein bL9 family.

In terms of biological role, binds to the 23S rRNA. The protein is Large ribosomal subunit protein bL9 of Cutibacterium acnes (strain DSM 16379 / KPA171202) (Propionibacterium acnes).